The sequence spans 238 residues: Triggering receptor expressed on myeloid cells 1 (238 aa).

Positions 1–20 are cleaved as a signal peptide; it reads MRSARLGRLLWMLFITEIQA. An Ig-like V-type domain is found at 21 to 129; the sequence is ATELPEEKYI…KDPIILFYPV (109 aa). Over 21–210 the chain is Extracellular; the sequence is ATELPEEKYI…DITRDTEISL (190 aa). An intrachain disulfide couples cysteine 41 to cysteine 113. The N-linked (GlcNAc...) asparagine glycan is linked to asparagine 135. Residues 141–169 form a disordered region; that stretch reads PASAETPTQSCSPTTTLPPTTTTNRHRPR. Positions 146–163 are enriched in low complexity; that stretch reads TPTQSCSPTTTLPPTTTT. Asparagine 198 carries an N-linked (GlcNAc...) asparagine glycan. A helical transmembrane segment spans residues 211 to 231; that stretch reads ILPAVCGLLSKSLVFIVLFVV. The Cytoplasmic portion of the chain corresponds to 232-238; sequence TRMSFTP.

In terms of assembly, monomer. Homomultimer; when activated. Interacts with TYROBP/DAP12. Interacts with TLR4.

The protein resides in the cell membrane. Functionally, cell surface receptor that plays important roles in innate and adaptive immunity by amplifying inflammatory responses. Upon activation by various ligands such as PGLYRP1, HMGB1 or HSP70, multimerizes and forms a complex with transmembrane adapter TYROBP/DAP12. In turn, initiates a SYK-mediated cascade of tyrosine phosphorylation, activating multiple downstream mediators such as BTK, MAPK1, MAPK3 or phospholipase C-gamma. This cascade promotes the neutrophil- and macrophage-mediated release of pro-inflammatory cytokines and/or chemokines, as well as their migration and thereby amplifies inflammatory responses that are triggered by bacterial and fungal infections. By also promoting the amplification of inflammatory signals that are initially triggered by Toll-like receptor (TLR) and NOD-like receptor engagement, plays a major role in the pathophysiology of acute and chronic inflammatory diseases of different etiologies including septic shock and atherosclerosis. The chain is Triggering receptor expressed on myeloid cells 1 (TREM1) from Sus scrofa (Pig).